A 240-amino-acid chain; its full sequence is Probable transcriptional regulatory protein Adeh_2184 (240 aa).

Belongs to the TACO1 family.

It localises to the cytoplasm. In Anaeromyxobacter dehalogenans (strain 2CP-C), this protein is Probable transcriptional regulatory protein Adeh_2184.